The primary structure comprises 142 residues: uncharacterized protein (142 aa).

Residues 75-91 (YAAILAQVSFAFLCTGF) form a helical membrane-spanning segment.

It localises to the membrane. This is an uncharacterized protein from Haemophilus influenzae (strain ATCC 51907 / DSM 11121 / KW20 / Rd).